The chain runs to 601 residues: Probable Xaa-Pro aminopeptidase P (601 aa).

Positions 398, 409, 507, and 521 each coordinate Mn(2+).

It belongs to the peptidase M24B family. Requires Mn(2+) as cofactor.

It catalyses the reaction Release of any N-terminal amino acid, including proline, that is linked to proline, even from a dipeptide or tripeptide.. Catalyzes the removal of a penultimate prolyl residue from the N-termini of peptides. The polypeptide is Probable Xaa-Pro aminopeptidase P (ampp) (Sclerotinia sclerotiorum (strain ATCC 18683 / 1980 / Ss-1) (White mold)).